We begin with the raw amino-acid sequence, 492 residues long: GTPase Der (492 aa).

2 EngA-type G domains span residues Pro-3 to Val-166 and Ile-205 to Thr-378. GTP is bound by residues Gly-9–Ser-16, Asp-56–Ile-60, Asn-118–Asp-121, Gly-211–Ser-218, Asp-258–Val-262, and Asn-323–Asp-326. Residues Arg-379–Ala-463 enclose the KH-like domain.

Belongs to the TRAFAC class TrmE-Era-EngA-EngB-Septin-like GTPase superfamily. EngA (Der) GTPase family. In terms of assembly, associates with the 50S ribosomal subunit.

GTPase that plays an essential role in the late steps of ribosome biogenesis. This is GTPase Der from Cronobacter sakazakii (strain ATCC BAA-894) (Enterobacter sakazakii).